Consider the following 465-residue polypeptide: Cysteine--tRNA ligase (465 aa).

Cys28 contributes to the Zn(2+) binding site. The 'HIGH' region motif lies at 30 to 40 (PTVYNYIHVGN). Residues Cys208, His233, and Glu237 each coordinate Zn(2+). The 'KMSKS' region signature appears at 265-269 (KMSKS). Position 268 (Lys268) interacts with ATP.

The protein belongs to the class-I aminoacyl-tRNA synthetase family. As to quaternary structure, monomer. The cofactor is Zn(2+).

Its subcellular location is the cytoplasm. It catalyses the reaction tRNA(Cys) + L-cysteine + ATP = L-cysteinyl-tRNA(Cys) + AMP + diphosphate. This Exiguobacterium sp. (strain ATCC BAA-1283 / AT1b) protein is Cysteine--tRNA ligase.